The primary structure comprises 465 residues: L-seryl-tRNA(Sec) selenium transferase (465 aa).

At lysine 294 the chain carries N6-(pyridoxal phosphate)lysine.

Belongs to the SelA family. Requires pyridoxal 5'-phosphate as cofactor.

It is found in the cytoplasm. The enzyme catalyses L-seryl-tRNA(Sec) + selenophosphate + H(+) = L-selenocysteinyl-tRNA(Sec) + phosphate. The protein operates within aminoacyl-tRNA biosynthesis; selenocysteinyl-tRNA(Sec) biosynthesis; selenocysteinyl-tRNA(Sec) from L-seryl-tRNA(Sec) (bacterial route): step 1/1. Its function is as follows. Converts seryl-tRNA(Sec) to selenocysteinyl-tRNA(Sec) required for selenoprotein biosynthesis. The protein is L-seryl-tRNA(Sec) selenium transferase of Maridesulfovibrio salexigens (strain ATCC 14822 / DSM 2638 / NCIMB 8403 / VKM B-1763) (Desulfovibrio salexigens).